Consider the following 695-residue polypeptide: GRB2-associated-binding protein 1 (695 aa).

Ser2 is subject to N-acetylserine. The region spanning 5–116 (EVVCSGWLRK…WVRCICDICG (112 aa)) is the PH domain. The segment at 204–229 (AKPTFSETDCNDNVPSHQTPASSQSK) is disordered. A compositionally biased stretch (polar residues) spans 206–229 (PTFSETDCNDNVPSHQTPASSQSK). 4 positions are modified to phosphoserine: Ser251, Ser253, Ser266, and Ser304. A disordered region spans residues 306–387 (SYDIPPTPGN…PAGMTPSRSN (82 aa)). The span at 314 to 334 (GNTYQIPRTFPESTLGQSSKL) shows a compositional bias: polar residues. Thr388 carries the phosphothreonine modification. A phosphoserine mark is found at Ser403 and Ser455. The disordered stretch occupies residues 453-659 (PNSPPRQHSG…GSSMADERVD (207 aa)). Polar residues-rich tracts occupy residues 457-466 (PRQHSGSFTE) and 605-617 (FASN…SSPM). Tyr628 bears the Phosphotyrosine mark. Residue Thr639 is modified to Phosphothreonine. Residue Ser652 is modified to Phosphoserine. Residue Tyr660 is modified to Phosphotyrosine. The interval 671–695 (LKSTREAWTDGRQSTESETPTKNVK) is disordered. Residues 673 to 685 (STREAWTDGRQST) show a composition bias toward basic and acidic residues. At Ser684 the chain carries Phosphoserine. Positions 686-695 (ESETPTKNVK) are enriched in polar residues.

This sequence belongs to the GAB family. As to quaternary structure, identified in a complex containing FRS2, GRB2, GAB1, PIK3R1 and SOS1. Forms a tripartite complex containing GAB1, METTL13 and SPRY2. Within the complex interacts with METTL13. Interacts with GRB2 and with other SH2-containing proteins. Interacts with phosphorylated LAT2. Interacts with PTPRJ. Interacts (phosphorylated) with PTPN11. Interacts with HCK. In terms of processing, phosphorylated on tyrosine residue(s) by the epidermal growth factor receptor (EGFR) and the insulin receptor (INSR). Tyrosine phosphorylation of GAB1 mediates interaction with several proteins that contain SH2 domains. Phosphorylated on tyrosine residues by HCK upon IL6 signaling. Phosphorylated in response to FGFR1 activation. As to expression, expressed in the inner ear (at protein level). Expression is detected in the cochlear duct, spiral limbus region, efferent and afferent nerves, and in spiral ganglion neurons (at protein level).

Its function is as follows. Adapter protein that plays a role in intracellular signaling cascades triggered by activated receptor-type kinases. Plays a role in FGFR1 signaling. Probably involved in signaling by the epidermal growth factor receptor (EGFR) and the insulin receptor (INSR). Involved in the MET/HGF-signaling pathway. The protein is GRB2-associated-binding protein 1 (Gab1) of Mus musculus (Mouse).